We begin with the raw amino-acid sequence, 146 residues long: Lipoprotein signal peptidase (146 aa).

A run of 3 helical transmembrane segments spans residues glycine 10 to phenylalanine 30, phenylalanine 54 to leucine 74, and phenylalanine 80 to leucine 100. Residues aspartate 110 and aspartate 127 contribute to the active site. The helical transmembrane segment at phenylalanine 118–leucine 138 threads the bilayer.

It belongs to the peptidase A8 family.

It is found in the cell inner membrane. The catalysed reaction is Release of signal peptides from bacterial membrane prolipoproteins. Hydrolyzes -Xaa-Yaa-Zaa-|-(S,diacylglyceryl)Cys-, in which Xaa is hydrophobic (preferably Leu), and Yaa (Ala or Ser) and Zaa (Gly or Ala) have small, neutral side chains.. It functions in the pathway protein modification; lipoprotein biosynthesis (signal peptide cleavage). This protein specifically catalyzes the removal of signal peptides from prolipoproteins. The sequence is that of Lipoprotein signal peptidase from Wolinella succinogenes (strain ATCC 29543 / DSM 1740 / CCUG 13145 / JCM 31913 / LMG 7466 / NCTC 11488 / FDC 602W) (Vibrio succinogenes).